The following is a 333-amino-acid chain: D-alanine--D-alanine ligase (333 aa).

One can recognise an ATP-grasp domain in the interval 124 to 329 (KMWFSALGIR…FAQYLSGNIM (206 aa)). 154 to 209 (ALEKWGSIFIKAASQGSSVGCYRVDNKEQLANSLEEAFKYSPYVVVEKTINARELE) is a binding site for ATP. The Mg(2+) site is built by Asp-283, Glu-296, and Asn-298.

Belongs to the D-alanine--D-alanine ligase family. The cofactor is Mg(2+). Mn(2+) serves as cofactor.

The protein resides in the cytoplasm. It catalyses the reaction 2 D-alanine + ATP = D-alanyl-D-alanine + ADP + phosphate + H(+). The protein operates within cell wall biogenesis; peptidoglycan biosynthesis. In terms of biological role, cell wall formation. The polypeptide is D-alanine--D-alanine ligase (Shewanella halifaxensis (strain HAW-EB4)).